Consider the following 130-residue polypeptide: MKEWLDEIKWNSDGLVPAIAQDHKTGRVLMMAWMNRESLALTAAEQRAIYWSRSRGKLWRKGEESGHVQKLHEMRLDCDADVIILMVEQLGHIACHTGRESCFYRVFEDGQWKTVDPVLKDPDAIYNAGH.

Asp77 serves as a coordination point for Mg(2+). Position 78 (Cys78) interacts with Zn(2+). Mg(2+)-binding residues include Asp79 and Asp81. The Zn(2+) site is built by Cys95 and Cys102.

This sequence belongs to the PRA-CH family. Homodimer. It depends on Mg(2+) as a cofactor. Requires Zn(2+) as cofactor.

It localises to the cytoplasm. It carries out the reaction 1-(5-phospho-beta-D-ribosyl)-5'-AMP + H2O = 1-(5-phospho-beta-D-ribosyl)-5-[(5-phospho-beta-D-ribosylamino)methylideneamino]imidazole-4-carboxamide. It functions in the pathway amino-acid biosynthesis; L-histidine biosynthesis; L-histidine from 5-phospho-alpha-D-ribose 1-diphosphate: step 3/9. In terms of biological role, catalyzes the hydrolysis of the adenine ring of phosphoribosyl-AMP. The protein is Phosphoribosyl-AMP cyclohydrolase of Pseudomonas putida (strain W619).